A 101-amino-acid chain; its full sequence is Large ribosomal subunit protein P1 (101 aa).

Residues 61–72 (AAPAAAAAPAAA) are compositionally biased toward low complexity. The tract at residues 61-101 (AAPAAAAAPAAAEEAEEEAEEEEEEEEAEEEAAAGLGALFG) is disordered. Positions 73–92 (EEAEEEAEEEEEEEEAEEEA) are enriched in acidic residues.

Belongs to the eukaryotic ribosomal protein P1/P2 family. As to quaternary structure, part of the 50S ribosomal subunit. Homodimer, it forms part of the ribosomal stalk which helps the ribosome interact with GTP-bound translation factors. Forms a heptameric uL10/P0(P1)2(P1)2(P1)2 complex, where uL10/P0 forms an elongated spine to which the P1 dimers bind in a sequential fashion.

In terms of biological role, forms part of the ribosomal stalk, playing a central role in the interaction of the ribosome with GTP-bound translation factors. The protein is Large ribosomal subunit protein P1 of Methanothermobacter thermautotrophicus (strain ATCC 29096 / DSM 1053 / JCM 10044 / NBRC 100330 / Delta H) (Methanobacterium thermoautotrophicum).